Consider the following 240-residue polypeptide: Large ribosomal subunit protein uL2 (240 aa).

The disordered stretch occupies residues 199 to 240; it reads DHPFGGGGRQHPGRPKSVSRDAAPGRKVGDIASKRTGRGGNE. Residues 221–231 are compositionally biased toward basic and acidic residues; sequence APGRKVGDIAS.

It belongs to the universal ribosomal protein uL2 family. In terms of assembly, part of the 50S ribosomal subunit. Forms a bridge to the 30S subunit in the 70S ribosome.

Functionally, one of the primary rRNA binding proteins. Required for association of the 30S and 50S subunits to form the 70S ribosome, for tRNA binding and peptide bond formation. It has been suggested to have peptidyltransferase activity; this is somewhat controversial. Makes several contacts with the 16S rRNA in the 70S ribosome. The protein is Large ribosomal subunit protein uL2 of Halobacterium salinarum (strain ATCC 29341 / DSM 671 / R1).